The chain runs to 116 residues: Large ribosomal subunit protein bL17 (116 aa).

The protein belongs to the bacterial ribosomal protein bL17 family. Part of the 50S ribosomal subunit. Contacts protein L32.

The chain is Large ribosomal subunit protein bL17 from Sulfurovum sp. (strain NBC37-1).